The primary structure comprises 98 residues: Large ribosomal subunit protein eL21 (98 aa).

Residues 1 to 23 (MVDRKGKGFRRKTRDKLSKHPRQ) form a disordered region. Residues 7-23 (KGFRRKTRDKLSKHPRQ) show a composition bias toward basic residues.

This sequence belongs to the eukaryotic ribosomal protein eL21 family.

The polypeptide is Large ribosomal subunit protein eL21 (Nanoarchaeum equitans (strain Kin4-M)).